The primary structure comprises 360 residues: DNA replication and repair protein RecF (360 aa).

ATP is bound at residue 30 to 37 (GHNGSGKT).

The protein belongs to the RecF family.

Its subcellular location is the cytoplasm. Functionally, the RecF protein is involved in DNA metabolism; it is required for DNA replication and normal SOS inducibility. RecF binds preferentially to single-stranded, linear DNA. It also seems to bind ATP. In Actinobacillus pleuropneumoniae serotype 5b (strain L20), this protein is DNA replication and repair protein RecF.